A 272-amino-acid polypeptide reads, in one-letter code: Formamidopyrimidine-DNA glycosylase (272 aa).

Proline 2 (schiff-base intermediate with DNA) is an active-site residue. Glutamate 3 acts as the Proton donor in catalysis. The active-site Proton donor; for beta-elimination activity is lysine 58. DNA-binding residues include histidine 93, arginine 112, and arginine 153. Residues 238–272 form an FPG-type zinc finger; the sequence is HVYGKSGQHCPKCGNILEDLKISNRGTVYCPHCQR. The Proton donor; for delta-elimination activity role is filled by arginine 262.

It belongs to the FPG family. In terms of assembly, monomer. It depends on Zn(2+) as a cofactor.

It carries out the reaction Hydrolysis of DNA containing ring-opened 7-methylguanine residues, releasing 2,6-diamino-4-hydroxy-5-(N-methyl)formamidopyrimidine.. The enzyme catalyses 2'-deoxyribonucleotide-(2'-deoxyribose 5'-phosphate)-2'-deoxyribonucleotide-DNA = a 3'-end 2'-deoxyribonucleotide-(2,3-dehydro-2,3-deoxyribose 5'-phosphate)-DNA + a 5'-end 5'-phospho-2'-deoxyribonucleoside-DNA + H(+). Its function is as follows. Involved in base excision repair of DNA damaged by oxidation or by mutagenic agents. Acts as a DNA glycosylase that recognizes and removes damaged bases. Has a preference for oxidized purines, such as 7,8-dihydro-8-oxoguanine (8-oxoG). Has AP (apurinic/apyrimidinic) lyase activity and introduces nicks in the DNA strand. Cleaves the DNA backbone by beta-delta elimination to generate a single-strand break at the site of the removed base with both 3'- and 5'-phosphates. In Dichelobacter nodosus (strain VCS1703A), this protein is Formamidopyrimidine-DNA glycosylase.